We begin with the raw amino-acid sequence, 263 residues long: Glutamate 5-kinase (263 aa).

An ATP-binding site is contributed by K15. Residues S55, D142, and N154 each coordinate substrate. ATP contacts are provided by residues 174 to 175 (SD) and 216 to 222 (TGGIETK).

This sequence belongs to the glutamate 5-kinase family.

The protein resides in the cytoplasm. It carries out the reaction L-glutamate + ATP = L-glutamyl 5-phosphate + ADP. It functions in the pathway amino-acid biosynthesis; L-proline biosynthesis; L-glutamate 5-semialdehyde from L-glutamate: step 1/2. Its function is as follows. Catalyzes the transfer of a phosphate group to glutamate to form L-glutamate 5-phosphate. The sequence is that of Glutamate 5-kinase from Alkaliphilus oremlandii (strain OhILAs) (Clostridium oremlandii (strain OhILAs)).